Reading from the N-terminus, the 281-residue chain is MAGTWLLLLLALGCPALPTGVGGTPFPSLAPPIMLLVDGKQQMVVVCLVLDVAPPGLDSPIWFSAGNGSALDAFTYGPSPATDGTWTNLAHLSLPSEELASWEPLVCHTGPGAEGHSRSTQPMHLSGEASTARTCPQEPLRGTPGGALWLGVLRLLLFKLLLFDLLLTCSCLCDPAGPLPSPATTTRLRALGSHRLHPATETGGREATSSPRPQPRDRRWGDTPPGRKPGSPVWGEGSYLSSYPTCPAQAWCSRSALRAPSSSLGAFFAGDLPPPLQAGAA.

Positions 1–23 (MAGTWLLLLLALGCPALPTGVGG) are cleaved as a signal peptide. Over 24 to 146 (TPFPSLAPPI…QEPLRGTPGG (123 aa)) the chain is Extracellular. Cysteine 47 and cysteine 107 form a disulfide bridge. Asparagine 67 is a glycosylation site (N-linked (GlcNAc...) asparagine). Residues 147-167 (ALWLGVLRLLLFKLLLFDLLL) traverse the membrane as a helical segment. Over 168 to 281 (TCSCLCDPAG…LPPPLQAGAA (114 aa)) the chain is Cytoplasmic. The interval 196–233 (LHPATETGGREATSSPRPQPRDRRWGDTPPGRKPGSPV) is disordered.

In terms of assembly, heterodimer with TCRB; disulfide linked. This heterodimer assembles with CD3 proteins into a signaling-competent pre-T-cell receptor complex. Interacts with RHBDD1. In terms of tissue distribution, expressed in immature but not mature T-cells. Also found in CD34+ cells from peripheral blood, CD34+ precursors from umbilical cord blood and adult bone marrow.

Its subcellular location is the membrane. It is found in the cell membrane. In terms of biological role, component of the pre-T-cell receptor complex (composed of PTCRA, TCRB and the CD3 complex) that has a crucial role in early T-cell development, particularly alpha-beta T cell differentiation. The chain is Pre T-cell antigen receptor alpha from Homo sapiens (Human).